The chain runs to 181 residues: Transcription termination/antitermination protein NusG (181 aa).

Residues proline 130–serine 161 enclose the KOW domain.

The protein belongs to the NusG family. In terms of assembly, monomer. Interacts with the transcription termination factor Rho and with RNA polymerase.

In terms of biological role, participates in transcription elongation, termination and antitermination. In the absence of Rho, increases the rate of transcription elongation by the RNA polymerase (RNAP), probably by partially suppressing pausing. In the presence of Rho, modulates most Rho-dependent termination events by interacting with the RNAP to render the complex more susceptible to the termination activity of Rho. May be required to overcome a kinetic limitation of Rho to function at certain terminators. Also involved in ribosomal RNA transcriptional antitermination. This chain is Transcription termination/antitermination protein NusG, found in Yersinia pestis.